Here is a 242-residue protein sequence, read N- to C-terminus: Uridylate kinase (242 aa).

12–15 is a binding site for ATP; the sequence is KLSG. Residues 20–25 are involved in allosteric activation by GTP; it reads GDEGFG. Residue glycine 54 coordinates UMP. 2 residues coordinate ATP: glycine 55 and arginine 59. Residues aspartate 74 and 135 to 142 each bind UMP; that span reads TGSPFFTT. ATP-binding residues include threonine 162, tyrosine 168, and aspartate 171.

It belongs to the UMP kinase family. Homohexamer.

The protein resides in the cytoplasm. The catalysed reaction is UMP + ATP = UDP + ADP. It functions in the pathway pyrimidine metabolism; CTP biosynthesis via de novo pathway; UDP from UMP (UMPK route): step 1/1. Allosterically activated by GTP. Inhibited by UTP. In terms of biological role, catalyzes the reversible phosphorylation of UMP to UDP. The polypeptide is Uridylate kinase (Pasteurella multocida (strain Pm70)).